Consider the following 170-residue polypeptide: Thialysine N-epsilon-acetyltransferase (170 aa).

An N-acetyltransferase domain is found at 4–168; it reads VRIREAKEGD…FQGEATRKLA (165 aa). 27–28 lines the substrate pocket; sequence FE. At Lys-29 the chain carries N6-acetyllysine. Position 92 (Glu-92) interacts with substrate. Acetyl-CoA-binding positions include 94 to 96, 102 to 107, 133 to 135, and Tyr-140; these read IYV, GQGIGS, and NQR. Residue Tyr-140 is the Proton donor of the active site. Glu-152 serves as a coordination point for substrate.

This sequence belongs to the acetyltransferase family. In terms of assembly, homodimer. Widely expressed. Under physiological conditions, SSAT2 is expressed at lower level that SSAT1 (SSAT). Many tissues express only SSAT1, several tissues express both SSAT1 and SSAT2, and bone, cervix, ovary and pineal gland expressed only SSAT2.

Its subcellular location is the cytoplasm. It carries out the reaction S-(2-aminoethyl)-L-cysteine + acetyl-CoA = S-(2-acetamidoethyl)-L-cysteine + CoA + H(+). The enzyme catalyses an alkane-alpha,omega-diamine + acetyl-CoA = an N-acetylalkane-alpha,omega-diamine + CoA + H(+). Functionally, catalyzes the N-acetylation of the amino acid thialysine (S-(2-aminoethyl)-L-cysteine), a L-lysine analog with the 4-methylene group substituted with a sulfur. May also catalyze acetylation of polyamines, such as norspermidine, spermidine or spermine. However, ability to acetylate polyamines is weak, suggesting that it does not act as a diamine acetyltransferase in vivo. In Homo sapiens (Human), this protein is Thialysine N-epsilon-acetyltransferase.